A 228-amino-acid polypeptide reads, in one-letter code: Ribonuclease 3 (228 aa).

Positions 7-136 constitute an RNase III domain; the sequence is LNKLKNEYNI…FNGALFLDQG (130 aa). Glu49 contacts Mg(2+). Asp53 is a catalytic residue. Mg(2+) contacts are provided by Asp122 and Glu125. Glu125 is an active-site residue. Residues 162-228 enclose the DRBM domain; that stretch reads DYKTDLQELL…AAKAALQKFE (67 aa). The disordered stretch occupies residues 207 to 228; it reads GEGHNKKAAEQQAAKAALQKFE. Low complexity predominate over residues 216–228; it reads EQQAAKAALQKFE.

It belongs to the ribonuclease III family. In terms of assembly, homodimer. Requires Mg(2+) as cofactor.

The protein resides in the cytoplasm. The enzyme catalyses Endonucleolytic cleavage to 5'-phosphomonoester.. Digests double-stranded RNA. Involved in the processing of primary rRNA transcript to yield the immediate precursors to the large and small rRNAs (23S and 16S). Processes some mRNAs, and tRNAs when they are encoded in the rRNA operon. Processes pre-crRNA and tracrRNA of type II CRISPR loci if present in the organism. The sequence is that of Ribonuclease 3 from Lactobacillus acidophilus (strain ATCC 700396 / NCK56 / N2 / NCFM).